A 569-amino-acid polypeptide reads, in one-letter code: Protein germ cell-less (569 aa).

A disordered region spans residues 17-43 (SNRRKRKRSTDSSLGKDDPAQLDTTQP). Positions 66-136 (SDVAVMALDK…MYSDEIEIES (71 aa)) constitute a BTB domain. Positions 517-553 (GANSDRPLSPSSADDSAVFIGDSEPSTPSSPAPRPRI) are disordered.

It is found in the cytoplasm. Required for the specification of pole cells and germ cell formation. Mothers with reduced glc function give rise to sterile adult progeny that lack germ cells. The protein is Protein germ cell-less (gcl) of Drosophila melanogaster (Fruit fly).